Consider the following 1241-residue polypeptide: ATP-dependent helicase/nuclease subunit A (1241 aa).

The 474-residue stretch at 12–485 (SQWTDDQWKA…IDLAKNFRSR (474 aa)) folds into the UvrD-like helicase ATP-binding domain. Position 33 to 40 (33 to 40 (AAAGSGKT)) interacts with ATP. One can recognise a UvrD-like helicase C-terminal domain in the interval 505-805 (GEIDYDADAE…RIMTIHKSKG (301 aa)).

The protein belongs to the helicase family. AddA subfamily. As to quaternary structure, heterodimer of AddA and AddB/RexB. The cofactor is Mg(2+).

It catalyses the reaction Couples ATP hydrolysis with the unwinding of duplex DNA by translocating in the 3'-5' direction.. The enzyme catalyses ATP + H2O = ADP + phosphate + H(+). The heterodimer acts as both an ATP-dependent DNA helicase and an ATP-dependent, dual-direction single-stranded exonuclease. Recognizes the chi site generating a DNA molecule suitable for the initiation of homologous recombination. The AddA nuclease domain is required for chi fragment generation; this subunit has the helicase and 3' -&gt; 5' nuclease activities. This chain is ATP-dependent helicase/nuclease subunit A, found in Bacillus cereus (strain ATCC 10987 / NRS 248).